Here is a 364-residue protein sequence, read N- to C-terminus: Inactive protein RESTRICTED TEV MOVEMENT 2 (364 aa).

Positions Val-14–Ala-121 constitute a sHSP domain. An A-1 repeat occupies Leu-129–Arg-133. The tract at residues Leu-129 to Lys-220 is 6 X 5 AA repeats A of L-E-E-[SKR]-[ERK]. Residues Leu-135 to Arg-139 form an A-2 repeat. One copy of the A-3 repeat lies at Leu-156–Glu-160. The B-1 repeat unit spans residues Ile-163–Ala-176. The 3 X 14 AA repeats B of [IMA]-[RK]-K-L-Q-E-E-A-K-A-K-E-[EK]-[LA] stretch occupies residues Ile-163–Leu-206. The stretch at Met-178–Ala-191 is one B-2 repeat. The stretch at Ala-193–Lys-205 is one B-3 repeat. The stretch at Leu-206–Lys-210 is one A-4 repeat. An A-5 repeat occupies Leu-211–Arg-215. One copy of the A-6 repeat lies at Leu-216–Lys-220. The helical transmembrane segment at Leu-322–Tyr-342 threads the bilayer. The segment at Cys-345 to Glu-364 is disordered. Over residues Ser-346 to Glu-364 the composition is skewed to low complexity.

The protein belongs to the small heat shock protein (HSP20) family.

The protein resides in the cell membrane. In terms of biological role, seems to not be involved in heat resistance. Unable to mediate restriction of long-distance movement of the pathogenic tobacco etch virus (TEV) without causing a hypersensitive response or inducing systemic acquired resistance. The polypeptide is Inactive protein RESTRICTED TEV MOVEMENT 2 (RTM2) (Arabidopsis thaliana (Mouse-ear cress)).